The chain runs to 406 residues: Tryptophan synthase beta chain (406 aa).

An N6-(pyridoxal phosphate)lysine modification is found at lysine 99.

It belongs to the TrpB family. Tetramer of two alpha and two beta chains. Pyridoxal 5'-phosphate is required as a cofactor.

It carries out the reaction (1S,2R)-1-C-(indol-3-yl)glycerol 3-phosphate + L-serine = D-glyceraldehyde 3-phosphate + L-tryptophan + H2O. It participates in amino-acid biosynthesis; L-tryptophan biosynthesis; L-tryptophan from chorismate: step 5/5. Functionally, the beta subunit is responsible for the synthesis of L-tryptophan from indole and L-serine. The protein is Tryptophan synthase beta chain of Methylobacterium nodulans (strain LMG 21967 / CNCM I-2342 / ORS 2060).